We begin with the raw amino-acid sequence, 206 residues long: Transmembrane emp24 domain-containing protein bai (206 aa).

The signal sequence occupies residues 1 to 20 (MARTLLILCTLMAWAWTGEA). Over 21-172 (VMFKLTPNTQ…RDTNEKTNSR (152 aa)) the chain is Lumenal. One can recognise a GOLD domain in the interval 30–140 (QKCLKEDIQA…LKPLEVDLKR (111 aa)). A helical transmembrane segment spans residues 173–193 (VLFFSIFSMCCLLGLATWQVL). At 194–206 (YLRRYFKAKKLIE) the chain is on the cytoplasmic side.

The protein belongs to the EMP24/GP25L family.

The protein localises to the membrane. Eca and bai are essential, though not redundant, for dorsoventral patterning of the embryo. Specifically required during early embryogenesis for the activity of maternal tkv, while the zygotic tkv is not affected. The polypeptide is Transmembrane emp24 domain-containing protein bai (Drosophila ananassae (Fruit fly)).